Here is a 968-residue protein sequence, read N- to C-terminus: RNA polymerase-associated protein RapA (968 aa).

The region spanning 164–334 (DVGRRHAPRV…FARLRLLDPN (171 aa)) is the Helicase ATP-binding domain. Position 177 to 184 (177 to 184 (DEVGLGKT)) interacts with ATP. The DEAH box motif lies at 280–283 (DEAH). The 196-residue stretch at 490 to 685 (RVEWLMGYLT…ALKAQLEQGR (196 aa)) folds into the Helicase C-terminal domain.

The protein belongs to the SNF2/RAD54 helicase family. RapA subfamily. Interacts with the RNAP. Has a higher affinity for the core RNAP than for the holoenzyme. Its ATPase activity is stimulated by binding to RNAP.

Transcription regulator that activates transcription by stimulating RNA polymerase (RNAP) recycling in case of stress conditions such as supercoiled DNA or high salt concentrations. Probably acts by releasing the RNAP, when it is trapped or immobilized on tightly supercoiled DNA. Does not activate transcription on linear DNA. Probably not involved in DNA repair. The protein is RNA polymerase-associated protein RapA of Salmonella typhi.